A 581-amino-acid chain; its full sequence is Arginine--tRNA ligase (581 aa).

The 'HIGH' region motif lies at 126–136 (PNLAKEMHVGH).

The protein belongs to the class-I aminoacyl-tRNA synthetase family. In terms of assembly, monomer.

Its subcellular location is the cytoplasm. It carries out the reaction tRNA(Arg) + L-arginine + ATP = L-arginyl-tRNA(Arg) + AMP + diphosphate. The polypeptide is Arginine--tRNA ligase (Shewanella denitrificans (strain OS217 / ATCC BAA-1090 / DSM 15013)).